An 866-amino-acid chain; its full sequence is Pentatricopeptide repeat-containing protein At1g15510, chloroplastic (866 aa).

The transit peptide at 1 to 52 (MASSAQSPHFYLNPGKSNSFQSKAYKQRNVNFYWNFGIRRLFLRKSQGLSVL) directs the protein to the chloroplast. PPR repeat units lie at residues 58 to 92 (STHF…RVAV), 93 to 123 (DEDV…ALSS), 128 to 158 (GVEL…MSER), 159 to 194 (NLFS…GVKP), 195 to 229 (DVYT…GYEL), 230 to 260 (DIDV…MPRR), 261 to 295 (DIIS…SVDP), 296 to 330 (DLMT…GFAV), 331 to 365 (DISV…DIVS), 366 to 396 (WTTM…SVKP), 397 to 431 (DEIT…RLIS), 432 to 466 (YVIV…NVIS), 467 to 493 (WTSI…MKMT), 497 to 531 (NAIT…GVGL), 532 to 561 (DDFL…SQKK), 562 to 596 (DVTS…RVRP), 597 to 631 (DEIT…GVTP), and 632 to 662 (NLKH…MPVT). Residues 667–742 (VWGALLNACR…DAGCSWVEVK (76 aa)) are type E motif. Residues 743–773 (GKVHAFLSDDKYHPQTKEINTVLEGFYEKMS) are type E(+) motif. Residues 774–866 (EVGLTKISES…FKDGECSCGD (93 aa)) form a type DYW motif region.

This sequence belongs to the PPR family. PCMP-H subfamily.

It is found in the plastid. It localises to the chloroplast. Its function is as follows. Regulates the RNA editing of the chloroplast transcript accD, and is essential for the early stages of chloroplast biogenesis. Required for the RNA editing of the chloroplast transcript ndhF. This is Pentatricopeptide repeat-containing protein At1g15510, chloroplastic (PCMP-H73) from Arabidopsis thaliana (Mouse-ear cress).